Here is a 227-residue protein sequence, read N- to C-terminus: PKHD-type hydroxylase Caul_0045 (227 aa).

The Fe2OG dioxygenase domain maps to 78–178 (TILSPLFNRY…RTASFFWIQS (101 aa)). Fe cation-binding residues include His96, Asp98, and His159. Arg169 lines the 2-oxoglutarate pocket.

Fe(2+) is required as a cofactor. Requires L-ascorbate as cofactor.

The protein is PKHD-type hydroxylase Caul_0045 of Caulobacter sp. (strain K31).